Consider the following 373-residue polypeptide: uncharacterized protein (373 aa).

Positions 14 to 168 constitute a CP-type G domain; it reads KKIVNKIIDE…LMDTPGVLEM (155 aa). Residue 117–124 participates in GTP binding; that stretch reads GYPNVGKS.

This sequence belongs to the TRAFAC class YlqF/YawG GTPase family.

This is an uncharacterized protein from Methanocaldococcus jannaschii (strain ATCC 43067 / DSM 2661 / JAL-1 / JCM 10045 / NBRC 100440) (Methanococcus jannaschii).